A 179-amino-acid polypeptide reads, in one-letter code: MPIEQKYFSLFSNLFKRLTTNNNNNNYLKMAPPNFETFKVKKLSDKAIIPQRGSKGAAGYDLSSAHELVVPAHGKALAMTDLQIAIPDGTYGRIAPRSGLAWKNFIDCGAGVIDSDYRGNVGVVLFNHSDVDFKVAVGDRVAQLIFERIVTPEPLEVDEIDETQRGAGGFGSTGVKVQN.

A mitochondrion-targeting transit peptide spans 1–41 (MPIEQKYFSLFSNLFKRLTTNNNNNNYLKMAPPNFETFKVK). DUTP-binding positions include 97-99 (RSG), 111-114 (GVID), G122, R165, and 170-171 (FG).

Belongs to the dUTPase family. In terms of assembly, homotrimer. Mg(2+) serves as cofactor.

The protein localises to the mitochondrion. It catalyses the reaction dUTP + H2O = dUMP + diphosphate + H(+). It functions in the pathway pyrimidine metabolism; dUMP biosynthesis; dUMP from dCTP (dUTP route): step 2/2. In terms of biological role, this enzyme is involved in nucleotide metabolism: it produces dUMP, the immediate precursor of thymidine nucleotides and it decreases the intracellular concentration of dUTP so that uracil cannot be incorporated into DNA. The protein is Deoxyuridine 5'-triphosphate nucleotidohydrolase, mitochondrial (dut) of Dictyostelium discoideum (Social amoeba).